Consider the following 147-residue polypeptide: Large ribosomal subunit protein uL13 (147 aa).

It belongs to the universal ribosomal protein uL13 family. Part of the 50S ribosomal subunit.

This protein is one of the early assembly proteins of the 50S ribosomal subunit, although it is not seen to bind rRNA by itself. It is important during the early stages of 50S assembly. The polypeptide is Large ribosomal subunit protein uL13 (Lactobacillus delbrueckii subsp. bulgaricus (strain ATCC 11842 / DSM 20081 / BCRC 10696 / JCM 1002 / NBRC 13953 / NCIMB 11778 / NCTC 12712 / WDCM 00102 / Lb 14)).